The following is an 86-amino-acid chain: uncharacterized protein (86 aa).

A helical membrane pass occupies residues 63–85 (VGGRSPSIQNSFFFFFFFFFFFF).

The protein localises to the membrane. This is an uncharacterized protein from Dictyostelium discoideum (Social amoeba).